A 1429-amino-acid chain; its full sequence is Autophagy-related protein 11 (1429 aa).

Positions threonine 71–serine 99 are disordered. Over residues serine 80–proline 89 the composition is skewed to low complexity. Coiled-coil stretches lie at residues valine 143–serine 173, aspartate 553–alanine 590, leucine 632–isoleucine 815, and glutamate 851–serine 989. Residues aspartate 1024–asparagine 1061 are disordered. Residues threonine 1042–asparagine 1061 are compositionally biased toward low complexity. Residues alanine 1105–lysine 1143 adopt a coiled-coil conformation. The span at serine 1209–threonine 1229 shows a compositional bias: basic and acidic residues. Disordered stretches follow at residues serine 1209–phenylalanine 1241 and serine 1336–proline 1429. The span at glutamate 1230–asparagine 1239 shows a compositional bias: acidic residues. Polar residues-rich tracts occupy residues alanine 1345–serine 1372 and glutamine 1383–serine 1393.

It belongs to the ATG11 family. Homodimer.

The protein resides in the preautophagosomal structure membrane. It is found in the vacuole membrane. Its function is as follows. Involved in cytoplasm to vacuole transport (Cvt), pexophagy, mitophagy and nucleophagy. Recruits mitochondria for their selective degradation via autophagy (mitophagy) during starvation. Works as scaffold proteins that recruit ATG proteins to the pre-autophagosome (PAS), the site of vesicle/autophagosome formation. Required for the Cvt vesicles completion. The protein is Autophagy-related protein 11 (apg-8) of Neurospora crassa (strain ATCC 24698 / 74-OR23-1A / CBS 708.71 / DSM 1257 / FGSC 987).